The sequence spans 557 residues: MRSDIVKKGFERAPHRSLLRACGLTDEDFKKPFIGIANSYIDIIPGHVHLREFAQIVKEAVREAGGVPFEFNVIGVDDGIAMGHSGMHYSLPSRELIADSIETVVEAHKLDALVCIPNCDKIVPGMIMAAARLNIPVIFVSGGPMAAGHLPDGRPIDLATAFEAVGAVSRGLMTENELRVIEENACPSCGSCSGMFTANSMNCLSEVLGIALPGNGSILATDPRRQELARKAGEQIVKLVEADLKFRDIVNEETIENAFTLDIAMGGSSNTVLHLLAIANEAGIDFPVEKIDQISRRTPTLCKLAPASQYHMEDLDRAGGISAILKELSKKGLLHLDRPTVSLKTLGEVIEDAEIKDPDVIRPIHNPYSETGGLAVLFGNIAPYGGVVKAAAVDPKIMVHRGKAVCFDSEEEAIAGITGGKVKAGDVVVIRYEGPRGGPGMREMLSPTSAIMGMGLGDKVSLITDGRFSGATRGACIGHISPEAAAGGPIGIIKDGDEILIDIPNRKIELLISEEEFKKRMENFKPKKKEIKSRWLRRYSRFVTSANKGAVLSDSCE.

Asp-78 is a binding site for Mg(2+). Position 119 (Cys-119) interacts with [2Fe-2S] cluster. Mg(2+)-binding residues include Asp-120 and Lys-121. An N6-carboxylysine modification is found at Lys-121. Cys-192 lines the [2Fe-2S] cluster pocket. Residue Glu-443 coordinates Mg(2+). Ser-469 functions as the Proton acceptor in the catalytic mechanism.

This sequence belongs to the IlvD/Edd family. As to quaternary structure, homodimer. The cofactor is [2Fe-2S] cluster. Requires Mg(2+) as cofactor.

It carries out the reaction (2R)-2,3-dihydroxy-3-methylbutanoate = 3-methyl-2-oxobutanoate + H2O. The catalysed reaction is (2R,3R)-2,3-dihydroxy-3-methylpentanoate = (S)-3-methyl-2-oxopentanoate + H2O. Its pathway is amino-acid biosynthesis; L-isoleucine biosynthesis; L-isoleucine from 2-oxobutanoate: step 3/4. It functions in the pathway amino-acid biosynthesis; L-valine biosynthesis; L-valine from pyruvate: step 3/4. Its function is as follows. Functions in the biosynthesis of branched-chain amino acids. Catalyzes the dehydration of (2R,3R)-2,3-dihydroxy-3-methylpentanoate (2,3-dihydroxy-3-methylvalerate) into 2-oxo-3-methylpentanoate (2-oxo-3-methylvalerate) and of (2R)-2,3-dihydroxy-3-methylbutanoate (2,3-dihydroxyisovalerate) into 2-oxo-3-methylbutanoate (2-oxoisovalerate), the penultimate precursor to L-isoleucine and L-valine, respectively. This Persephonella marina (strain DSM 14350 / EX-H1) protein is Dihydroxy-acid dehydratase.